A 319-amino-acid chain; its full sequence is Ferrochelatase (319 aa).

Fe cation-binding residues include histidine 193 and glutamate 274.

This sequence belongs to the ferrochelatase family.

The protein localises to the cytoplasm. The enzyme catalyses heme b + 2 H(+) = protoporphyrin IX + Fe(2+). The protein operates within porphyrin-containing compound metabolism; protoheme biosynthesis; protoheme from protoporphyrin-IX: step 1/1. In terms of biological role, catalyzes the ferrous insertion into protoporphyrin IX. The chain is Ferrochelatase from Actinobacillus pleuropneumoniae serotype 7 (strain AP76).